Here is a 466-residue protein sequence, read N- to C-terminus: Soluble pyridine nucleotide transhydrogenase (466 aa).

36-45 contributes to the FAD binding site; sequence ERYHNVGGGC.

Belongs to the class-I pyridine nucleotide-disulfide oxidoreductase family. FAD is required as a cofactor.

It is found in the cytoplasm. The catalysed reaction is NAD(+) + NADPH = NADH + NADP(+). In terms of biological role, conversion of NADPH, generated by peripheral catabolic pathways, to NADH, which can enter the respiratory chain for energy generation. The polypeptide is Soluble pyridine nucleotide transhydrogenase (Klebsiella pneumoniae subsp. pneumoniae (strain ATCC 700721 / MGH 78578)).